The following is a 567-amino-acid chain: uncharacterized protein (567 aa).

Residues 1-31 are Lumenal-facing; sequence MLDTILINVFRRDGDDDDDDGQDPALQELYS. The chain crosses the membrane as a helical span at residues 32–52; sequence SWALFILLVLLIGALLTSYYV. The Cytoplasmic segment spans residues 53–64; that stretch reads QSKKIRAIHETV. Residues 65-85 form a helical membrane-spanning segment; that stretch reads ISVFVGMVVGLIIRVSPGLII. Over 86 to 87 the chain is Lumenal; that stretch reads QN. Residues 88 to 108 form a helical membrane-spanning segment; it reads MVSFHSTYFFNVLLPPIILNS. At 109–128 the chain is on the cytoplasmic side; the sequence is GYELHQSNFFRNIGTILTFA. The chain crosses the membrane as a helical span at residues 129 to 149; the sequence is FAGTFISAVTLGVLVYIFSFL. Over 150–159 the chain is Lumenal; it reads NFENLSMTFV. The helical transmembrane segment at 160–180 threads the bilayer; that stretch reads EALSMGATLSATDPVTVLAIF. At 181–188 the chain is on the cytoplasmic side; that stretch reads NSYKVDQK. The chain crosses the membrane as a helical span at residues 189–209; the sequence is LYTIIFGESILNDAVAIVMFE. Residues 210–227 lie on the Lumenal side of the membrane; it reads TLQQFQGKTLHFFTLFSG. Residues 228–248 form a helical membrane-spanning segment; that stretch reads IGIFIITFFISLLIGVSIGLI. At 249–277 the chain is on the cytoplasmic side; that stretch reads TALLLKYSYLRRYPSIESCIILLMAYTSY. A helical membrane pass occupies residues 278–298; it reads FFSNGCHMSGVVSLLFCGITL. The Lumenal segment spans residues 299 to 315; it reads KHYAFFNMSYKAKLSTK. A helical membrane pass occupies residues 316–338; it reads YVFRVLAQLSENFIFIYLGMSLF. Residues 339 to 347 lie on the Cytoplasmic side of the membrane; the sequence is TQVDLVYKP. The helical transmembrane segment at 348–366 threads the bilayer; it reads IFILITTVAVTASRYMNVF. The Lumenal segment spans residues 367-392; that stretch reads PLSNLLNKFHRQRNGNLIDHIPYSYQ. A helical transmembrane segment spans residues 393 to 413; it reads MMLFWAGLRGAVGVALAAGFE. Topologically, residues 414-424 are cytoplasmic; sequence GENAQTLRATT. The helical transmembrane segment at 425 to 445 threads the bilayer; sequence LVVVVLTLIIFGGTTARMLEI. The Lumenal segment spans residues 446–567; the sequence is LHIETGVAAD…RDNLKNGTKK (122 aa). At Ser515 the chain carries Phosphoserine.

The protein belongs to the monovalent cation:proton antiporter 1 (CPA1) transporter (TC 2.A.36) family.

Its subcellular location is the golgi apparatus membrane. This is an uncharacterized protein from Schizosaccharomyces pombe (strain 972 / ATCC 24843) (Fission yeast).